A 1131-amino-acid chain; its full sequence is MASGSRTKHSYHNSSQGQAQSSGTSNMNYKDSISKAIAQYTADARLHAVFEQSGESGKSFDYSQSVKTTTQSVPERQITAYLTKIQRGGHIQPFGCMIAVDEASFRIIAYSENACEMLSLTPQSVPSLDKSEILTVGTDVRTLFTPSSSVLLERAFGAREITLLNPIWIHSKNSGKPFYAILHRVDVGIVIDLEPARTEDPALSIAGAVQSQKLAVRAISHLQSLPGGDIKLLCDTVVESVRELTGYDRVMVYKFHEDEHGEVVAESKRSDLEPYIGLHYPATDIPQASRFLFKQNRVRMIVDCHATPVRVTQDESLMQPLCLVGSTLRAPHGCHAQYMANMGSIASLTLAVIINGNDEEAVGGGRNSMRLWGLVVGHHTSVRSIPFPLRYACEFLMQAFGLQLNMELQLASQLSEKHVLRTQTLLCDMLLRDSPPGIVTQSPSIMDLVKCDGAALYYQRKYYPLGVTPTEAQIKDIVEWLLAYHGDSTGLSTDSLADAGYPGAASLGDAVCGMAVAYITSKDFLFWFRSHTAKEIKWGGAKHHPEDKDDGQRMHPRSSFKAFLEVVKSRSSPWENAEMDAIHSLQLILRDSFKDAEASNSKAIVHALGEMELQGIDELSSVAREMVRLIETATAPIFGVDVNGRINGWNEKVVELTGLSAEEAKGKSLVHDLLYKESQESAEKLLYNALRGVEGKNVEIKLRTFGAEQVEKAVFLVVNACSSRDYTNSIVGVSFVGQDVTGEKIVMDKFIHIQGDYKAIVHSPNPLIPPIFASDENTSCSEWNTAMEKLSGWSREEIVGKMLVGEIFGSCCRLKGPDAMTKFMIVLHNAIGGQDTDKFPFSFFDRNGKYVQALLTANKRVNMEGDTIGAFCFIQIASPELQQALRVQRQQEKKCYSQMKELAYICQEVKSPLNGIRFTNSLLEATNLTEYQKQYLETSAACERQMSKIIRDVDLENIEDGSLTLEKEDFFLGSVIDAVVSQVMLLLREKGVQLIRDIPEEIKTLTVHGDQVRIQQVLADFLLNMVRYAPSPDGWVEIQLRPSMMPISDGATVVHIELRIICPGEGLPPELVQDMFHSSRWVTQEGLGLSMCRKMLKLMNGEIQYIRESERCYFMIILDLPMTRKGPKSVG.

A compositionally biased stretch (basic residues) spans 1-11; sequence MASGSRTKHSY. A disordered region spans residues 1–26; that stretch reads MASGSRTKHSYHNSSQGQAQSSGTSN. Residues 14–25 are compositionally biased toward low complexity; the sequence is SSQGQAQSSGTS. One can recognise a GAF domain in the interval 229–408; the sequence is DIKLLCDTVV…AFGLQLNMEL (180 aa). Residue cysteine 334 coordinates phytochromobilin. PAS domains lie at 622 to 693 and 756 to 808; these read VARE…LRGV and DYKA…GEIF. The Histidine kinase domain occupies 904-1124; sequence YICQEVKSPL…MIILDLPMTR (221 aa).

The protein belongs to the phytochrome family. In terms of assembly, homodimer. Contains one covalently linked phytochromobilin chromophore.

Its function is as follows. Regulatory photoreceptor which exists in two forms that are reversibly interconvertible by light: the Pr form that absorbs maximally in the red region of the spectrum and the Pfr form that absorbs maximally in the far-red region. Photoconversion of Pr to Pfr induces an array of morphogenic responses, whereas reconversion of Pfr to Pr cancels the induction of those responses. Pfr controls the expression of a number of nuclear genes including those encoding the small subunit of ribulose-bisphosphate carboxylase, chlorophyll A/B binding protein, protochlorophyllide reductase, rRNA, etc. It also controls the expression of its own gene(s) in a negative feedback fashion. This is Phytochrome B1 from Solanum lycopersicum (Tomato).